We begin with the raw amino-acid sequence, 113 residues long: Nucleoid-associated protein Athe_1143 (113 aa).

This sequence belongs to the YbaB/EbfC family. Homodimer.

It localises to the cytoplasm. The protein localises to the nucleoid. Its function is as follows. Binds to DNA and alters its conformation. May be involved in regulation of gene expression, nucleoid organization and DNA protection. This chain is Nucleoid-associated protein Athe_1143, found in Caldicellulosiruptor bescii (strain ATCC BAA-1888 / DSM 6725 / KCTC 15123 / Z-1320) (Anaerocellum thermophilum).